The sequence spans 480 residues: Iron-sulfur cluster assembly SufBD family protein slr0074 (480 aa).

It belongs to the iron-sulfur cluster assembly SufBD family.

The polypeptide is Iron-sulfur cluster assembly SufBD family protein slr0074 (Synechocystis sp. (strain ATCC 27184 / PCC 6803 / Kazusa)).